Reading from the N-terminus, the 689-residue chain is Glycine--tRNA ligase beta subunit (689 aa).

Belongs to the class-II aminoacyl-tRNA synthetase family. As to quaternary structure, tetramer of two alpha and two beta subunits.

Its subcellular location is the cytoplasm. The enzyme catalyses tRNA(Gly) + glycine + ATP = glycyl-tRNA(Gly) + AMP + diphosphate. The protein is Glycine--tRNA ligase beta subunit of Lacticaseibacillus casei (strain BL23) (Lactobacillus casei).